Here is a 570-residue protein sequence, read N- to C-terminus: Adenine deaminase (570 aa).

It belongs to the metallo-dependent hydrolases superfamily. Adenine deaminase family. It depends on Mn(2+) as a cofactor.

It carries out the reaction adenine + H2O + H(+) = hypoxanthine + NH4(+). This chain is Adenine deaminase, found in Oleidesulfovibrio alaskensis (strain ATCC BAA-1058 / DSM 17464 / G20) (Desulfovibrio alaskensis).